Reading from the N-terminus, the 164-residue chain is Hoefavidin (164 aa).

An N-terminal signal peptide occupies residues 1 to 22; that stretch reads MNKVLAIVLTITVAGFAQTAFA. Positions 32 to 155 constitute an Avidin-like domain; it reads KLLAGASNWV…GQDDFMQSVA (124 aa). Biotin contacts are provided by N42, S46, Y68, N70, and G76. C77 and C108 are oxidised to a cystine. Positions 110, 112, and 148 each coordinate biotin.

Belongs to the avidin/streptavidin family. In terms of assembly, exhibits a dynamic oligomeric assembly: the apo form exits as homooctamers, which dissociate into homodimers upon biotin binding. The X-ray structure of the intact hoefavidin reveals unique crystal packing generated by an octameric cylindrical structure wherein the C-terminal segments of each monomer are introduced into the entrance of the biotin-binding site of an adjacent non-canonical monomer.

The protein localises to the secreted. In terms of biological role, the exact role played by hoefavidin in the host organism is still obscure. Forms a strong non-covalent complex with biotin and 2-iminobiotin. The protein is Hoefavidin of Hoeflea phototrophica (strain DSM 17068 / NCIMB 14078 / DFL-43).